A 135-amino-acid polypeptide reads, in one-letter code: Holo-[acyl-carrier-protein] synthase (135 aa).

The Mg(2+) site is built by aspartate 7 and glutamate 57.

Belongs to the P-Pant transferase superfamily. AcpS family. The cofactor is Mg(2+).

Its subcellular location is the cytoplasm. It catalyses the reaction apo-[ACP] + CoA = holo-[ACP] + adenosine 3',5'-bisphosphate + H(+). Functionally, transfers the 4'-phosphopantetheine moiety from coenzyme A to a Ser of acyl-carrier-protein. In Corynebacterium glutamicum (strain ATCC 13032 / DSM 20300 / JCM 1318 / BCRC 11384 / CCUG 27702 / LMG 3730 / NBRC 12168 / NCIMB 10025 / NRRL B-2784 / 534), this protein is Holo-[acyl-carrier-protein] synthase.